Here is a 100-residue protein sequence, read N- to C-terminus: Integration host factor subunit beta (100 aa).

Residues 81–100 (KPGKELRDRVNEDEHEEAHT) form a disordered region. The segment covering 82–100 (PGKELRDRVNEDEHEEAHT) has biased composition (basic and acidic residues).

The protein belongs to the bacterial histone-like protein family. In terms of assembly, heterodimer of an alpha and a beta chain.

Functionally, this protein is one of the two subunits of integration host factor, a specific DNA-binding protein that functions in genetic recombination as well as in transcriptional and translational control. In Pseudomonas putida (Arthrobacter siderocapsulatus), this protein is Integration host factor subunit beta (ihfB).